Here is a 411-residue protein sequence, read N- to C-terminus: Arginine deiminase (411 aa).

The active-site Amidino-cysteine intermediate is the cysteine 401.

The protein belongs to the arginine deiminase family.

The protein resides in the cytoplasm. It carries out the reaction L-arginine + H2O = L-citrulline + NH4(+). Its pathway is amino-acid degradation; L-arginine degradation via ADI pathway; carbamoyl phosphate from L-arginine: step 1/2. This chain is Arginine deiminase, found in Streptococcus equi subsp. zooepidemicus (strain H70).